A 198-amino-acid polypeptide reads, in one-letter code: Nudix hydrolase 21, chloroplastic (198 aa).

The N-terminal 37 residues, 1–37 (MISLFISNFSNLSNLSPTFDNMNMNIPSKKIVPVPTP), are a transit peptide targeting the chloroplast. One can recognise a Nudix hydrolase domain in the interval 59–191 (GYRQVVGCVP…WMREALEAFI (133 aa)). Residues 98-119 (GGWEIDESIEEAALRETIEEAG) carry the Nudix box motif. Mg(2+) is bound by residues Glu113 and Glu117.

It belongs to the Nudix hydrolase family. The cofactor is Mg(2+). Mn(2+) is required as a cofactor. As to expression, expressed in roots, leaves, stems and inflorescences.

Its subcellular location is the plastid. It is found in the chloroplast. In terms of biological role, probably mediates the hydrolysis of some nucleoside diphosphate derivatives. The sequence is that of Nudix hydrolase 21, chloroplastic (NUDT21) from Arabidopsis thaliana (Mouse-ear cress).